The chain runs to 317 residues: RLIMFVGDPSSSNELDRFSVCPFSNDTVKMIFLTRENRKHDFYTLDTMNRHNEFKKSIIKRPVVFITHGFTSSATEKNFVAMSEALMHTGDFLIIMVDWRMAACTDEYPGLKYMFYKAAVGNTRLVGNFIAMIAKKLVEQYKVPMTNIRLVGHSLGAHISGFAGKRVQELKLGKFSEIIGLDPAGPSFKKNDCSERICETDAHYVQILHTSSNLGTERTLGTVDFYINNGSNQPGCRYIIGETCSHTRAVKYFTECIRRECCLIGVPQSKNPQPVSKCTRNECVCVGLNAKKYPKRGSFYVPVEAEAPYCNNNGKII.

The N-terminal stretch at 1–7 is a signal peptide; sequence RLIMFVG. Positions 8 to 17 are excised as a propeptide; sequence DPSSSNELDR. A disulfide bond links Cys-21 and Cys-104. Asn-25 is a glycosylation site (N-linked (GlcNAc...) asparagine). Catalysis depends on Ser-154, which acts as the Nucleophile. Asp-182 serves as the catalytic Charge relay system. Cys-193 and Cys-198 are oxidised to a cystine. Residue Asn-229 is glycosylated (N-linked (GlcNAc...) asparagine). Cys-236 and Cys-244 form a disulfide bridge. His-246 acts as the Charge relay system in catalysis. 3 disulfide bridges follow: Cys-261–Cys-285, Cys-262–Cys-310, and Cys-278–Cys-283.

Belongs to the AB hydrolase superfamily. Lipase family. Expressed by the venom gland.

It is found in the secreted. The catalysed reaction is a 1,2-diacyl-sn-glycero-3-phosphocholine + H2O = a 2-acyl-sn-glycero-3-phosphocholine + a fatty acid + H(+). Its function is as follows. Catalyzes the hydrolysis of phosphatidylcholine with phospholipase A1 activity. May act as an allergen and induce hemolytic activity. This is Phospholipase A1 1 from Dolichovespula maculata (Bald-faced hornet).